We begin with the raw amino-acid sequence, 264 residues long: Thymidylate synthase (264 aa).

Residues Arg-21 and 126–127 (RR) each bind dUMP. The active-site Nucleophile is Cys-146. Residues 166–169 (RSAD), Asn-177, and 207–209 (HLY) contribute to the dUMP site. (6R)-5,10-methylene-5,6,7,8-tetrahydrofolate is bound at residue Asp-169. Residue Ala-263 participates in (6R)-5,10-methylene-5,6,7,8-tetrahydrofolate binding.

It belongs to the thymidylate synthase family. Bacterial-type ThyA subfamily. In terms of assembly, homodimer.

Its subcellular location is the cytoplasm. The enzyme catalyses dUMP + (6R)-5,10-methylene-5,6,7,8-tetrahydrofolate = 7,8-dihydrofolate + dTMP. It functions in the pathway pyrimidine metabolism; dTTP biosynthesis. Catalyzes the reductive methylation of 2'-deoxyuridine-5'-monophosphate (dUMP) to 2'-deoxythymidine-5'-monophosphate (dTMP) while utilizing 5,10-methylenetetrahydrofolate (mTHF) as the methyl donor and reductant in the reaction, yielding dihydrofolate (DHF) as a by-product. This enzymatic reaction provides an intracellular de novo source of dTMP, an essential precursor for DNA biosynthesis. The polypeptide is Thymidylate synthase (Bradyrhizobium sp. (strain ORS 278)).